Reading from the N-terminus, the 118-residue chain is Ribosome-binding factor A (118 aa).

Belongs to the RbfA family. In terms of assembly, monomer. Binds 30S ribosomal subunits, but not 50S ribosomal subunits or 70S ribosomes.

The protein resides in the cytoplasm. In terms of biological role, one of several proteins that assist in the late maturation steps of the functional core of the 30S ribosomal subunit. Associates with free 30S ribosomal subunits (but not with 30S subunits that are part of 70S ribosomes or polysomes). Required for efficient processing of 16S rRNA. May interact with the 5'-terminal helix region of 16S rRNA. In Clostridium beijerinckii (strain ATCC 51743 / NCIMB 8052) (Clostridium acetobutylicum), this protein is Ribosome-binding factor A.